Here is a 447-residue protein sequence, read N- to C-terminus: Argininosuccinate lyase (447 aa).

Belongs to the lyase 1 family. Argininosuccinate lyase subfamily.

It is found in the cytoplasm. It catalyses the reaction 2-(N(omega)-L-arginino)succinate = fumarate + L-arginine. Its pathway is amino-acid biosynthesis; L-arginine biosynthesis; L-arginine from L-ornithine and carbamoyl phosphate: step 3/3. The protein is Argininosuccinate lyase of Bacteroides fragilis (strain ATCC 25285 / DSM 2151 / CCUG 4856 / JCM 11019 / LMG 10263 / NCTC 9343 / Onslow / VPI 2553 / EN-2).